A 536-amino-acid chain; its full sequence is Chorismate synthase (536 aa).

H17 is an active-site residue. The segment at 37–59 (EDVQPQLNRRRPGQGPLSTQRRE) is disordered. H104 is a catalytic residue. The disordered stretch occupies residues 344–377 (ERDGCSAATLSRERASDGRTTSRHEEEVERGRER). Residues 354–377 (SRERASDGRTTSRHEEEVERGRER) are compositionally biased toward basic and acidic residues. Residue D489 is part of the active site.

It belongs to the chorismate synthase family. FMNH2 is required as a cofactor.

The enzyme catalyses 5-O-(1-carboxyvinyl)-3-phosphoshikimate = chorismate + phosphate. It catalyses the reaction FMNH2 + NADP(+) = FMN + NADPH + 2 H(+). Its pathway is metabolic intermediate biosynthesis; chorismate biosynthesis; chorismate from D-erythrose 4-phosphate and phosphoenolpyruvate: step 7/7. Its function is as follows. Bifunctional chorismate synthase and flavin reductase. Catalyzes the conversion of 5-enolpyruvylshikimate 3-phosphate (EPSP) to form chorismate. Acts also as a flavin reductase (FR) able to generate reduced flavin mononucleotide in the presence of NADPH. This Toxoplasma gondii protein is Chorismate synthase (AROC).